A 541-amino-acid chain; its full sequence is 2-succinyl-5-enolpyruvyl-6-hydroxy-3-cyclohexene-1-carboxylate synthase (541 aa).

It belongs to the TPP enzyme family. MenD subfamily. As to quaternary structure, homodimer. It depends on Mg(2+) as a cofactor. The cofactor is Mn(2+). Requires thiamine diphosphate as cofactor.

It carries out the reaction isochorismate + 2-oxoglutarate + H(+) = 5-enolpyruvoyl-6-hydroxy-2-succinyl-cyclohex-3-ene-1-carboxylate + CO2. It functions in the pathway quinol/quinone metabolism; 1,4-dihydroxy-2-naphthoate biosynthesis; 1,4-dihydroxy-2-naphthoate from chorismate: step 2/7. Its pathway is quinol/quinone metabolism; menaquinone biosynthesis. Its function is as follows. Catalyzes the thiamine diphosphate-dependent decarboxylation of 2-oxoglutarate and the subsequent addition of the resulting succinic semialdehyde-thiamine pyrophosphate anion to isochorismate to yield 2-succinyl-5-enolpyruvyl-6-hydroxy-3-cyclohexene-1-carboxylate (SEPHCHC). This chain is 2-succinyl-5-enolpyruvyl-6-hydroxy-3-cyclohexene-1-carboxylate synthase, found in Rhodococcus jostii (strain RHA1).